Here is a 225-residue protein sequence, read N- to C-terminus: Uracil-DNA glycosylase (225 aa).

Residue Asp-64 is the Proton acceptor of the active site.

Belongs to the uracil-DNA glycosylase (UDG) superfamily. UNG family.

Its subcellular location is the cytoplasm. The catalysed reaction is Hydrolyzes single-stranded DNA or mismatched double-stranded DNA and polynucleotides, releasing free uracil.. Functionally, excises uracil residues from the DNA which can arise as a result of misincorporation of dUMP residues by DNA polymerase or due to deamination of cytosine. The polypeptide is Uracil-DNA glycosylase (Agathobacter rectalis (strain ATCC 33656 / DSM 3377 / JCM 17463 / KCTC 5835 / VPI 0990) (Eubacterium rectale)).